A 365-amino-acid polypeptide reads, in one-letter code: Leu/Ile/Val/Thr-binding protein (365 aa).

The N-terminal stretch at 1 to 21 (MKGKTLLAGCIALSLSHMAFA) is a signal peptide. Cys74 and Cys99 are joined by a disulfide.

The protein belongs to the leucine-binding protein family.

It localises to the periplasm. Functionally, this protein is a component of the leucine, isoleucine, valine, threonine transport system, which is one of the two periplasmic binding protein-dependent transport systems of the high-affinity transport of the branched-chain amino acids. This Salmonella typhimurium (strain LT2 / SGSC1412 / ATCC 700720) protein is Leu/Ile/Val/Thr-binding protein (livJ).